Reading from the N-terminus, the 31-residue chain is Phalloidin proprotein (31 aa).

A propeptide spanning residues 1 to 10 (MSDINATRLP) is cleaved from the precursor. The cyclopeptide (Ala-Pro) cross-link spans 11–17 (AWLATCP). Positions 12-16 (WLATC) form a cross-link, 2'-cysteinyl-6'-hydroxytryptophan sulfoxide (Trp-Cys). A propeptide spanning residues 18-31 (CAGDDVNPLLTRGE) is cleaved from the precursor.

This sequence belongs to the MSDIN fungal toxin family. In terms of processing, processed by the macrocyclase-peptidase enzyme POPB to yield a toxic cyclic heptapeptide. POPB first removes 10 residues from the N-terminus. Conformational trapping of the remaining peptide forces the enzyme to release this intermediate rather than proceed to macrocyclization. The enzyme rebinds the remaining peptide in a different conformation and catalyzes macrocyclization of the N-terminal 7 residues.

Major toxin that belongs to the bicyclic heptapeptides called phallotoxins. Although structurally related to amatoxins, phallotoxins have a different mode of action, which is the stabilization of F-actin. Phallotoxins are poisonous when administered parenterally, but not orally because of poor absorption. The polypeptide is Phalloidin proprotein (Amanita ocreata (Western North American destroying angel)).